We begin with the raw amino-acid sequence, 318 residues long: uncharacterized protein (318 aa).

The span at 1–22 (MKASQERSEARRTAHSVKEKKY) shows a compositional bias: basic and acidic residues. Disordered regions lie at residues 1 to 29 (MKAS…ASPR) and 293 to 318 (DDGD…DDDE).

This is an uncharacterized protein from Ictalurid herpesvirus 1 (strain Auburn) (IcHV-1).